A 661-amino-acid polypeptide reads, in one-letter code: SUMO-activating enzyme subunit 2 (661 aa).

Residues 29–34 (GAGGIG), Asp53, 61–64 (NLNR), Lys77, and 122–127 (DNISAR) each bind ATP. Residues Cys163 and Cys166 each contribute to the Zn(2+) site. Cys178 acts as the Glycyl thioester intermediate in catalysis. Positions 436 and 439 each coordinate Zn(2+). The tract at residues 545–661 (KKQQQKEKDQ…SKKLKSNLQD (117 aa)) is disordered. A compositionally biased stretch (basic and acidic residues) spans 548 to 563 (QQKEKDQKEGKTTTIE). Low complexity-rich tracts occupy residues 577-607 (TSQT…NNNN) and 623-634 (SSTTTSSATPSI).

It belongs to the ubiquitin-activating E1 family. As to quaternary structure, heterodimer of sae1 and sae2. The complex binds sumo via sae2.

It is found in the nucleus. Its pathway is protein modification; protein sumoylation. Functionally, the dimeric enzyme acts as an E1 ligase for sumo. It mediates ATP-dependent activation of sumo and formation of a thioester with a conserved cysteine residue on sae2. The sequence is that of SUMO-activating enzyme subunit 2 (uba2) from Dictyostelium discoideum (Social amoeba).